The chain runs to 352 residues: Ion-translocating oxidoreductase complex subunit D (352 aa).

5 helical membrane-spanning segments follow: residues 20 to 40 (IMLL…RFFG), 42 to 62 (GTLV…ALVL), 78 to 109 (ALLT…VIIA), 123 to 143 (PAMI…TSWL), and 148 to 168 (IAVN…GHTA). T187 carries the FMN phosphoryl threonine modification. Transmembrane regions (helical) follow at residues 214 to 234 (ILAG…GVWL), 242 to 262 (WHIP…GWLF), 267 to 287 (LAAP…FFIL), and 301 to 318 (LMFG…RSFG).

It belongs to the NqrB/RnfD family. The complex is composed of six subunits: RsxA, RsxB, RsxC, RsxD, RsxE and RsxG. FMN is required as a cofactor.

The protein localises to the cell inner membrane. Its function is as follows. Part of a membrane-bound complex that couples electron transfer with translocation of ions across the membrane. Required to maintain the reduced state of SoxR. The polypeptide is Ion-translocating oxidoreductase complex subunit D (Shigella flexneri).